A 1254-amino-acid polypeptide reads, in one-letter code: MNYIPTQTFYGRRWRPRPAFRPWQVSMQPTPTMVTPMLQAPDLQAQQMQQLISAVSALTTKQNVKAPKGQRQKKQQKPKEKKENQKKKPTQKKKQQQKPKPQAKKKKPGRRERMCMKIENDCIFEVKLDGKVTGYACLVGDKVMKPAHVKGTIDNPDLAKLTYKKSSKYDLECAQIPVHMKSDASKYTHEKPEGHYNWHHGAVQYSGGRFTIPTGAGKPGDSGRPIFDNKGRVVAIVLGGANEGARTALSVVTWTKDMVTRVTPEGTEEWSAALMMCILANTSFPCSSPPCYPCCYEKQPEQTLRMLEDNVNRPGYYELLEASMTCRNRSRHRRSVTEHFNVYKATRPYLAYCADCGDGYFCYSPVAIEKIRDEAPDGMLKIQVSAQIGLDKAGTHAHTKIRYMAGHDVQESKRDSLRVYTSAACSIHGTMGHFIVAHCPPGDYLKVSFEDADSHVKACKVQYKHDPLPVGREKFVVRPHFGVELPCTSYQLTTAPTDEEIDMHTPPDIPDRTLLSQTAGNVKITAGGRTIRYNCTCGRDNVGTTSTDKTINTCKIDQCHAAVTSHDKWQFTSPFVPRADQTARRGKVHVPFPLTNVTCRVPLARAPDVTYGKKEVTLRLHPDHPTLFSYRSLGAEPHPYEEWVDKFSERIIPVTEEGIEYQWGNNPPVRLWAQLTTEGKPHGWPHEIIQYYYGLYPAATIAAVSGASLMALLTLAATCCMLATARRKCLTPYALTPGAVVPLTLGLLCCAPRANAASFAETMAYLWDENKTLFWMEFAAPAAALALLACCIKSLICCCKPFSFLVLLSLGASAKAYEHTATIPNVVGFPYKAHIERNGFSPMTLQLEVVETSWEPTLNLEYITCEYKTVVPSPFIKCCGTSECSSKEQPDYQCKVYTGVYPFMWGGAYCFCDSENTQLSEAYVDRSDVCKHDHASAYKAHTASLKATIRISYGTINQTTEAFVNGEHAVNVGGSKFIFGPISTAWSPFDNKIVVYKDDVYNQDFPPYGSGQPGRFGDIQSRTVESKDLYANTALKLSRPSPGVVHVPYTPTPSGFKYWLKEKGSSLNTKAPFGCKIKTNPVRAMDCAVGSIPVSMDIPDSAFTRVVDAPAVTDLSCQVVVCTHSSDFGGVATLSYKTDKPGKCAVHSHSNVATLQEATVDVKEDGKVTVHFSTASASPAFKVSVCDAKTTCTAACEPPKDHIVPYGASHNNQVFPDMSGTAMTWVQRLASGLGGLALIAVVVLVLVTCITMRR.

Residues 43 to 77 (LQAQQMQQLISAVSALTTKQNVKAPKGQRQKKQQK) are host transcription inhibition. The interval 60–113 (TKQNVKAPKGQRQKKQQKPKEKKENQKKKPTQKKKQQQKPKPQAKKKKPGRRER) is disordered. The Nuclear localization signal signature appears at 70–108 (QRQKKQQKPKEKKENQKKKPTQKKKQQQKPKPQAKKKKP). Residues 84-110 (NQKKKPTQKKKQQQKPKPQAKKKKPGR) are compositionally biased toward basic residues. The interval 95–123 (QQQKPKPQAKKKKPGRRERMCMKIENDCI) is binding to the viral RNA. The segment at 108–122 (PGRRERMCMKIENDC) is ribosome-binding. A disulfide bond links Cys122 and Cys137. One can recognise a Peptidase S3 domain in the interval 122-270 (CIFEVKLDGK…RVTPEGTEEW (149 aa)). Catalysis depends on His148, which acts as the Charge relay system. The Nuclear export signal motif lies at 153-163 (IDNPDLAKLTY). The interval 164-169 (KKSSKY) is interaction with spike glycoprotein E2. Asp170 functions as the Charge relay system in the catalytic mechanism. The segment at 192 to 202 (PEGHYNWHHGA) is dimerization of the capsid protein. The Charge relay system role is filled by Ser222. Residues 228 to 232 (DNKGR) are dimerization of the capsid protein. The functions as an uncleaved signal peptide for the precursor of protein E3/E2 stretch occupies residues 271–282 (SAALMMCILANT). Over 271-694 (SAALMMCILA…PHEIIQYYYG (424 aa)) the chain is Extracellular. Disulfide bonds link Cys277-Cys286, Cys291-Cys295, and Cys294-Cys326. The N-linked (GlcNAc...) asparagine; by host glycan is linked to Asn281. Asn328 carries an N-linked (GlcNAc...) asparagine; by host glycan. Cystine bridges form between Cys353–Cys459, Cys356–Cys362, Cys425–Cys439, Cys487–Cys599, Cys535–Cys559, and Cys537–Cys554. Interaction with host Mxra8 receptor stretches follow at residues 360–363 (YFCY) and 396–398 (HAH). The tract at residues 518 to 521 (TAGN) is interaction with host Mxra8 receptor. A glycan (N-linked (GlcNAc...) asparagine; by host) is linked at Asn534. The tract at residues 550-556 (TINTCKI) is interaction with host Mxra8 receptor. A glycan (N-linked (GlcNAc...) asparagine; by host) is linked at Asn596. A helical membrane pass occupies residues 695–715 (LYPAATIAAVSGASLMALLTL). The Cytoplasmic portion of the chain corresponds to 716–756 (AATCCMLATARRKCLTPYALTPGAVVPLTLGLLCCAPRANA). Cys719 carries the S-palmitoyl cysteine; by host lipid modification. The interaction with the capsid protein stretch occupies residues 724 to 728 (TARRK). S-palmitoyl cysteine; by host attachment occurs at residues Cys729, Cys749, and Cys750. The tract at residues 729–749 (CLTPYALTPGAVVPLTLGLLC) is transient transmembrane before p62-6K protein processing. Cys729 and Cys750 form a disulfide bridge. At 757 to 771 (ASFAETMAYLWDENK) the chain is on the extracellular side. The helical transmembrane segment at 772–792 (TLFWMEFAAPAAALALLACCI) threads the bilayer. A topological domain (cytoplasmic) is located at residue Lys793. Residues 794–814 (SLICCCKPFSFLVLLSLGASA) traverse the membrane as a helical segment. Topologically, residues 815 to 1231 (KAYEHTATIP…AMTWVQRLAS (417 aa)) are extracellular. Intrachain disulfides connect Cys865–Cys930, Cys878–Cys910, Cys879–Cys912, and Cys884–Cys894. Positions 900–917 (VYPFMWGGAYCFCDSENT) are E1 fusion peptide loop. Residue Asn957 is glycosylated (N-linked (GlcNAc...) asparagine; by host). Intrachain disulfides connect Cys1075/Cys1087, Cys1117/Cys1192, Cys1122/Cys1196, and Cys1144/Cys1186. A helical membrane pass occupies residues 1232-1252 (GLGGLALIAVVVLVLVTCITM). Cys1249 carries the S-palmitoyl cysteine; by host lipid modification. Cys1249 is lipidated: S-stearoyl cysteine; by host. Over 1253–1254 (RR) the chain is Cytoplasmic.

As to quaternary structure, homodimer. Homomultimer. Interacts with host karyopherin KPNA4; this interaction allows the nuclear import of the viral capsid protein. Interacts with spike glycoprotein E2. Interacts with host IRAK1; the interaction leads to inhibition of IRAK1-dependent signaling. The precursor of protein E3/E2 and E1 form a heterodimer shortly after synthesis. In terms of assembly, interacts with spike glycoprotein E2. The precursor of protein E3/E2 and E1 form a heterodimer shortly after synthesis. Processing of the precursor of protein E3/E2 into E2 and E3 results in a heterodimer of the spike glycoproteins E2 and E1. Spike at virion surface are constituted of a trimer of E2-E1 heterodimers. After target cell attachment and endocytosis, E1 change conformation to form homotrimers. Interacts with 6K protein. E1/E2 heterodimer interacts with host LDLR. As to quaternary structure, interacts with spike glycoprotein E1. Processing of the precursor of protein E3/E2 into E2 and E3 results in a heterodimer of the spike glycoproteins E2 and E1. Spike at virion surface are constituted of a trimer of E2-E1 heterodimers. Interacts with 6K protein. Interacts with host MXRA8; this interaction mediates virus entry. Oligomer. Interacts with spike glycoprotein E1. Interacts with spike glycoprotein E2. Structural polyprotein: Specific enzymatic cleavages in vivo yield mature proteins. Capsid protein is auto-cleaved during polyprotein translation, unmasking a signal peptide at the N-terminus of the precursor of E3/E2. The remaining polyprotein is then targeted to the host endoplasmic reticulum, where host signal peptidase cleaves it into pE2, 6K and E1 proteins. pE2 is further processed to mature E3 and E2 by host furin in trans-Golgi vesicle. In terms of processing, palmitoylated via thioester bonds. These palmitoylations may induce disruption of the C-terminus transmembrane. This would result in the reorientation of E2 C-terminus from lumenal to cytoplasmic side. Post-translationally, N-glycosylated. Palmitoylated via thioester bonds.

It is found in the virion. Its subcellular location is the host cytoplasm. It localises to the host cell membrane. The protein resides in the host nucleus. The protein localises to the virion membrane. It is found in the host Golgi apparatus. Its subcellular location is the host trans-Golgi network. It localises to the host endoplasmic reticulum. It catalyses the reaction Autocatalytic release of the core protein from the N-terminus of the togavirus structural polyprotein by hydrolysis of a -Trp-|-Ser- bond.. Forms an icosahedral capsid with a T=4 symmetry composed of 240 copies of the capsid protein surrounded by a lipid membrane through which penetrate 80 spikes composed of trimers of E1-E2 heterodimers. The capsid protein binds to the viral RNA genome at a site adjacent to a ribosome binding site for viral genome translation following genome release. Possesses a protease activity that results in its autocatalytic cleavage from the nascent structural protein. Following its self-cleavage, the capsid protein transiently associates with ribosomes, and within several minutes the protein binds to viral RNA and rapidly assembles into icosahedric core particles. The resulting nucleocapsid eventually associates with the cytoplasmic domain of the spike glycoprotein E2 at the cell membrane, leading to budding and formation of mature virions. In case of infection, new virions attach to target cells and after clathrin-mediated endocytosis their membrane fuses with the host endosomal membrane. This leads to the release of the nucleocapsid into the cytoplasm, followed by an uncoating event necessary for the genomic RNA to become accessible. The uncoating might be triggered by the interaction of capsid proteins with ribosomes. Binding of ribosomes would release the genomic RNA since the same region is genomic RNA-binding and ribosome-binding. Specifically inhibits interleukin-1 receptor-associated kinase 1/IRAK1-dependent signaling during viral entry, representing a means by which the alphaviruses may evade innate immune detection and activation prior to viral gene expression. Its function is as follows. Provides the signal sequence for the translocation of the precursor of protein E3/E2 to the host endoplasmic reticulum. Furin-cleaved E3 remains associated with spike glycoprotein E1 and mediates pH protection of the latter during the transport via the secretory pathway. After virion release from the host cell, the assembly protein E3 is gradually released in the extracellular space. In terms of biological role, plays a role in viral attachment to target host cell, by binding to the cell receptor MXRA8. The host LDLR may also act as a cell receptor for viral entry. Synthesized as a p62 precursor which is processed by furin at the cell membrane just before virion budding, giving rise to E2-E1 heterodimer. The p62-E1 heterodimer is stable, whereas E2-E1 is unstable and dissociate at low pH. p62 is processed at the last step, presumably to avoid E1 fusion activation before its final export to cell surface. E2 C-terminus contains a transitory transmembrane that would be disrupted by palmitoylation, resulting in reorientation of the C-terminal tail from lumenal to cytoplasmic side. This step is critical since E2 C-terminus is involved in budding by interacting with capsid proteins. This release of E2 C-terminus in cytoplasm occurs lately in protein export, and precludes premature assembly of particles at the endoplasmic reticulum membrane. Functionally, acts as a viroporin that participates in virus glycoprotein processing and transport to the plasma membrane, cell permeabilization and budding of viral particles. The cation channel is permeable to Na(+)&gt;K(+)&gt;Ca(2+) in vitro. Disrupts the calcium homeostasis of the cell, probably at the endoplasmic reticulum level. This leads to cytoplasmic calcium elevation. Because of its lipophilic properties, the 6K protein is postulated to influence the selection of lipids that interact with the transmembrane domains of the glycoproteins, which, in turn, affects the deformability of the bilayer required for the extreme curvature that occurs as budding proceeds. Present in low amount in virions, about 3% compared to viral glycoproteins. Class II viral fusion protein. Fusion activity is inactive as long as E1 is bound to E2 in mature virion. After virus attachment to target cell via host MXRA8 and endocytosis, acidification of the endosome induce dissociation of E1/E2 heterodimer and concomitant trimerization of the E1 subunits. This E1 trimer is fusion active, and promotes release of viral nucleocapsid in cytoplasm after endosome and viral membrane fusion. Efficient fusion requires the presence of cholesterol and sphingolipid in the target membrane. The sequence is that of Structural polyprotein from Aedes (Common banded mosquito).